A 270-amino-acid polypeptide reads, in one-letter code: Replication protein A 32 kDa subunit (270 aa).

Methionine 1 is subject to N-acetylmethionine. Serine 4 and serine 8 each carry phosphoserine; by PRKDC. Threonine 21 is modified (phosphothreonine; by PRKDC). The tract at residues 21–40 (TQSPGGFGSPAPSQAEKKSR) is disordered. Residue serine 23 is modified to Phosphoserine; by CDK2. Phosphoserine; by CDK1 is present on serine 29. Serine 33 bears the Phosphoserine; by PRKDC mark. Residues lysine 37 and lysine 38 each participate in a glycyl lysine isopeptide (Lys-Gly) (interchain with G-Cter in ubiquitin) cross-link. The segment at residues 74-148 (VTIVGIIRHA…KSLVAFKIMP (75 aa)) is a DNA-binding region (OB). Residues 187 to 270 (GMSEAGNFGG…DDHFKSTDAE (84 aa)) are interaction with RAD52, TIPIN, UNG and XPA.

It belongs to the replication factor A protein 2 family. In terms of assembly, component of the replication protein A complex (RPA/RP-A), a heterotrimeric complex composed of RPA1, RPA2 and RPA3. Interacts with PRPF19; the PRP19-CDC5L complex is recruited to the sites of DNA repair where it ubiquitinates the replication protein A complex (RPA). Interacts with SERTAD3. Interacts with TIPIN. Interacts with TIMELESS. Interacts with PPP4R2; the interaction is direct, DNA damage-dependent and mediates the recruitment of the PP4 catalytic subunit PPP4C. Interacts (hyperphosphorylated) with RAD51. Interacts with SMARCAL1; the interaction is direct and mediates the recruitment to the RPA complex of SMARCAL1. Interacts with RAD52 and XPA; those interactions are direct and associate RAD52 and XPA to the RPA complex. Interacts with FBH1. Interacts with ETAA1; the interaction is direct and promotes ETAA1 recruitment at stalled replication forks. Interacts with DDI2. Interacts (in unphosphorylated form via N-terminus) with EIF4EBP3; the interaction enhances EIF4EBP3-mediated inhibition of EIF4E-mediated mRNA nuclear export. Post-translationally, differentially phosphorylated throughout the cell cycle, becoming phosphorylated at the G1-S transition and dephosphorylated in late mitosis. Mainly phosphorylated at Ser-23 and Ser-29, by cyclin A-CDK2 and cyclin B-CDK1, respectively during DNA replication and mitosis. Dephosphorylation may require the serine/threonine-protein phosphatase 4. Phosphorylation at Ser-23 and Ser-29 is a prerequisite for further phosphorylation. Becomes hyperphosphorylated on additional residues including Ser-4, Ser-8, Thr-21 and Ser-33 in response to DNA damage. Hyperphosphorylation is mediated by ATM, ATR and PRKDC. Primarily recruited to DNA repair nuclear foci as a hypophosphorylated form it undergoes subsequent hyperphosphorylation, catalyzed by ATR. Hyperphosphorylation is required for RAD51 recruitment to chromatin and efficient DNA repair. Phosphorylation at Thr-21 depends upon RFWD3 presence. DNA damage-induced 'Lys-63'-linked polyubiquitination by PRPF19 mediates ATRIP recruitment to the RPA complex at sites of DNA damage and activation of ATR. Ubiquitinated by RFWD3 at stalled replication forks in response to DNA damage: ubiquitination by RFWD3 does not lead to degradation by the proteasome and promotes removal of the RPA complex from stalled replication forks, promoting homologous recombination.

The protein localises to the nucleus. The protein resides in the PML body. As part of the heterotrimeric replication protein A complex (RPA/RP-A), binds and stabilizes single-stranded DNA intermediates, that form during DNA replication or upon DNA stress. It prevents their reannealing and in parallel, recruits and activates different proteins and complexes involved in DNA metabolism. Thereby, it plays an essential role both in DNA replication and the cellular response to DNA damage. In the cellular response to DNA damage, the RPA complex controls DNA repair and DNA damage checkpoint activation. Through recruitment of ATRIP activates the ATR kinase a master regulator of the DNA damage response. It is required for the recruitment of the DNA double-strand break repair factors RAD51 and RAD52 to chromatin in response to DNA damage. Also recruits to sites of DNA damage proteins like XPA and XPG that are involved in nucleotide excision repair and is required for this mechanism of DNA repair. Also plays a role in base excision repair (BER) probably through interaction with UNG. Also recruits SMARCAL1/HARP, which is involved in replication fork restart, to sites of DNA damage. May also play a role in telomere maintenance. The polypeptide is Replication protein A 32 kDa subunit (RPA2) (Pongo abelii (Sumatran orangutan)).